Consider the following 119-residue polypeptide: uncharacterized protein (119 aa).

This is an uncharacterized protein from Bacillus subtilis (strain 168).